Consider the following 206-residue polypeptide: MSKKASMHKEEKHEKGQHKQPADEQPLGIDPEVSSGEASEGACQESDAKVQELEKALEEAQQQAEKYRGEMMRFAADFENFRKQKERELQAAGTRSIENTIRELLPLVDDMKRVMEHAPDDLEQSGEARPYLEGVELLWKNLLKWFERKGVKQIEACGQKLDVNFHEAITQVDHPDAEPDTVIEEYQTGYVMGDKVLRHAKVIVAR.

A disordered region spans residues 1–64; that stretch reads MSKKASMHKE…KALEEAQQQA (64 aa). The span at 46–58 shows a compositional bias: basic and acidic residues; the sequence is SDAKVQELEKALE.

The protein belongs to the GrpE family. In terms of assembly, homodimer.

The protein localises to the cytoplasm. Participates actively in the response to hyperosmotic and heat shock by preventing the aggregation of stress-denatured proteins, in association with DnaK and GrpE. It is the nucleotide exchange factor for DnaK and may function as a thermosensor. Unfolded proteins bind initially to DnaJ; upon interaction with the DnaJ-bound protein, DnaK hydrolyzes its bound ATP, resulting in the formation of a stable complex. GrpE releases ADP from DnaK; ATP binding to DnaK triggers the release of the substrate protein, thus completing the reaction cycle. Several rounds of ATP-dependent interactions between DnaJ, DnaK and GrpE are required for fully efficient folding. This is Protein GrpE from Prosthecochloris aestuarii (strain DSM 271 / SK 413).